We begin with the raw amino-acid sequence, 151 residues long: Deoxyuridine 5'-triphosphate nucleotidohydrolase (151 aa).

Residues 70–72 (RSG), asparagine 83, 87–89 (LID), and methionine 97 contribute to the substrate site.

The protein belongs to the dUTPase family. The cofactor is Mg(2+).

It catalyses the reaction dUTP + H2O = dUMP + diphosphate + H(+). The protein operates within pyrimidine metabolism; dUMP biosynthesis; dUMP from dCTP (dUTP route): step 2/2. Functionally, this enzyme is involved in nucleotide metabolism: it produces dUMP, the immediate precursor of thymidine nucleotides and it decreases the intracellular concentration of dUTP so that uracil cannot be incorporated into DNA. The polypeptide is Deoxyuridine 5'-triphosphate nucleotidohydrolase (Yersinia enterocolitica serotype O:8 / biotype 1B (strain NCTC 13174 / 8081)).